The chain runs to 237 residues: Phosphoribosylaminoimidazole-succinocarboxamide synthase (237 aa).

This sequence belongs to the SAICAR synthetase family.

It carries out the reaction 5-amino-1-(5-phospho-D-ribosyl)imidazole-4-carboxylate + L-aspartate + ATP = (2S)-2-[5-amino-1-(5-phospho-beta-D-ribosyl)imidazole-4-carboxamido]succinate + ADP + phosphate + 2 H(+). It participates in purine metabolism; IMP biosynthesis via de novo pathway; 5-amino-1-(5-phospho-D-ribosyl)imidazole-4-carboxamide from 5-amino-1-(5-phospho-D-ribosyl)imidazole-4-carboxylate: step 1/2. The chain is Phosphoribosylaminoimidazole-succinocarboxamide synthase from Listeria innocua serovar 6a (strain ATCC BAA-680 / CLIP 11262).